Reading from the N-terminus, the 1392-residue chain is DNA-directed RNA polymerase subunit beta'' (1392 aa).

Zn(2+)-binding residues include cysteine 224, cysteine 295, cysteine 302, and cysteine 305.

It belongs to the RNA polymerase beta' chain family. RpoC2 subfamily. In plastids the minimal PEP RNA polymerase catalytic core is composed of four subunits: alpha, beta, beta', and beta''. When a (nuclear-encoded) sigma factor is associated with the core the holoenzyme is formed, which can initiate transcription. Zn(2+) serves as cofactor.

Its subcellular location is the plastid. It localises to the chloroplast. The enzyme catalyses RNA(n) + a ribonucleoside 5'-triphosphate = RNA(n+1) + diphosphate. In terms of biological role, DNA-dependent RNA polymerase catalyzes the transcription of DNA into RNA using the four ribonucleoside triphosphates as substrates. This chain is DNA-directed RNA polymerase subunit beta'', found in Solanum tuberosum (Potato).